We begin with the raw amino-acid sequence, 226 residues long: N-acetyltransferase family 8 member 3 (226 aa).

Transmembrane regions (helical) follow at residues 36 to 56 (MLLL…LFLA) and 58 to 78 (GSWL…WFLA). The 160-residue stretch at 61–220 (LLVLLSILTL…PMINLKYSLT (160 aa)) folds into the N-acetyltransferase domain.

Belongs to the camello family.

It localises to the nucleus membrane. Its subcellular location is the cytoplasm. The protein resides in the perinuclear region. It carries out the reaction L-lysyl-[protein] + acetyl-CoA = N(6)-acetyl-L-lysyl-[protein] + CoA + H(+). Has histone acetyltransferase activity in vitro, with specificity for histone H4. The sequence is that of N-acetyltransferase family 8 member 3 from Mus musculus (Mouse).